The following is a 502-amino-acid chain: ATP synthase subunit alpha (502 aa).

Gly-169–Thr-176 is an ATP binding site.

The protein belongs to the ATPase alpha/beta chains family. F-type ATPases have 2 components, CF(1) - the catalytic core - and CF(0) - the membrane proton channel. CF(1) has five subunits: alpha(3), beta(3), gamma(1), delta(1), epsilon(1). CF(0) has three main subunits: a(1), b(2) and c(9-12). The alpha and beta chains form an alternating ring which encloses part of the gamma chain. CF(1) is attached to CF(0) by a central stalk formed by the gamma and epsilon chains, while a peripheral stalk is formed by the delta and b chains.

It is found in the cell membrane. It carries out the reaction ATP + H2O + 4 H(+)(in) = ADP + phosphate + 5 H(+)(out). Produces ATP from ADP in the presence of a proton gradient across the membrane. The alpha chain is a regulatory subunit. The chain is ATP synthase subunit alpha from Staphylococcus aureus (strain Mu3 / ATCC 700698).